Consider the following 453-residue polypeptide: Endoglucanase A (453 aa).

The signal sequence occupies residues 1 to 26 (MNCRKYLLSGLAVFGLAATSAVAALS). Residue aspartate 82 is the Nucleophile of the active site. Positions 115-126 (TTPTTRKPTTTP) are linker ('hinge') (Pro-Thr box). Histidine 417 is an active-site residue.

The protein belongs to the glycosyl hydrolase 9 (cellulase E) family. Monomer.

Its subcellular location is the periplasm. It catalyses the reaction Endohydrolysis of (1-&gt;4)-beta-D-glucosidic linkages in cellulose, lichenin and cereal beta-D-glucans.. Functionally, high levels of endoglucanase activity detected on acid-swollen cellulose, ball-milled cellulose, and carboxymethyl cellulose; moderate levels detected on filter paper, phosphoric acid-swollen cellulose, lichenan, and xylan. In Fibrobacter succinogenes (Bacteroides succinogenes), this protein is Endoglucanase A (endA).